Consider the following 114-residue polypeptide: Large ribosomal subunit protein bL21c (114 aa).

It belongs to the bacterial ribosomal protein bL21 family. As to quaternary structure, part of the 50S ribosomal subunit.

The protein localises to the plastid. It is found in the chloroplast. Functionally, this protein binds to 23S rRNA. The protein is Large ribosomal subunit protein bL21c of Staurastrum punctulatum (Green alga).